Consider the following 633-residue polypeptide: Glutamyl-tRNA(Gln) amidotransferase subunit E (633 aa).

This sequence belongs to the GatB/GatE family. GatE subfamily. Heterodimer of GatD and GatE.

It catalyses the reaction L-glutamyl-tRNA(Gln) + L-glutamine + ATP + H2O = L-glutaminyl-tRNA(Gln) + L-glutamate + ADP + phosphate + H(+). Functionally, allows the formation of correctly charged Gln-tRNA(Gln) through the transamidation of misacylated Glu-tRNA(Gln) in organisms which lack glutaminyl-tRNA synthetase. The reaction takes place in the presence of glutamine and ATP through an activated gamma-phospho-Glu-tRNA(Gln). The GatDE system is specific for glutamate and does not act on aspartate. This chain is Glutamyl-tRNA(Gln) amidotransferase subunit E, found in Methanococcus vannielii (strain ATCC 35089 / DSM 1224 / JCM 13029 / OCM 148 / SB).